The sequence spans 880 residues: GRB2-associated and regulator of MAPK protein 2 (880 aa).

The interval 12–320 (RWSMGAFPLD…HFLLLTDTPR (309 aa)) is CABIT. Disordered stretches follow at residues 385–407 (PGAV…PGDS), 461–483 (IVGP…SEAV), 527–548 (SSLS…GSGS), 569–611 (SESS…ADTP), and 633–713 (APFG…ELGQ). Low complexity-rich tracts occupy residues 640–663 (PFSG…STSG) and 683–696 (QGYS…LSSS). The residue at position 740 (S740) is a Phosphoserine. Residues 813 to 877 (SALSLEEVSR…KIMQFIKGWR (65 aa)) enclose the SAM domain.

It belongs to the GAREM family.

In terms of biological role, probable adapter protein that provides a critical link between cell surface epidermal growth factor receptor and the MAPK/ERK signaling pathway. The protein is GRB2-associated and regulator of MAPK protein 2 (Garem2) of Mus musculus (Mouse).